An 890-amino-acid polypeptide reads, in one-letter code: Protein FAM171A1 (890 aa).

A signal peptide spans 1–21; sequence MSRSAALLLCLLGCHVWKAVT. The Extracellular portion of the chain corresponds to 22–303; sequence KTLREPGAGA…VTQDITTYHT (282 aa). Residues Asn-190 and Asn-194 are each glycosylated (N-linked (GlcNAc...) asparagine). Residues 304-324 traverse the membrane as a helical segment; it reads VFLLAILGGMAFILLVLLCLL. The Cytoplasmic portion of the chain corresponds to 325-890; sequence LYYCRRKCMK…ERPLMAFNIK (566 aa). Ser-358, Ser-360, Ser-371, Ser-422, Ser-443, and Ser-525 each carry phosphoserine. Disordered regions lie at residues 730 to 759 and 818 to 890; these read AGRN…RGDA and EGSS…FNIK. Positions 747 to 757 are enriched in basic and acidic residues; the sequence is NEPKSARKGRG. Residues 822-833 are compositionally biased toward polar residues; it reads RRSGGQLPSLQE. Phosphoserine occurs at positions 849 and 855. Acidic residues predominate over residues 858-869; the sequence is EEEEDDDDDDQG. Residues 870–883 show a composition bias toward basic and acidic residues; it reads EDKKSPWQKREERP.

It belongs to the FAM171 family. In terms of assembly, interacts with ADAM10, NSG1 and OAZ1.

It is found in the cell membrane. Its function is as follows. Involved in the regulation of the cytoskeletal dynamics, plays a role in actin stress fiber formation. The sequence is that of Protein FAM171A1 (FAM171A1) from Pongo abelii (Sumatran orangutan).